The chain runs to 242 residues: ATP-dependent dethiobiotin synthetase BioD 1 (242 aa).

An ATP-binding site is contributed by Asn12–Thr17. Thr16 provides a ligand contact to Mg(2+). Lys37 is a catalytic residue. Asp66 is an ATP binding site. Mg(2+) contacts are provided by Asp66 and Glu124. ATP-binding positions include Asn184 to Arg185, Pro213 to Leu215, and Glu220.

Belongs to the dethiobiotin synthetase family. Homodimer. It depends on Mg(2+) as a cofactor.

It is found in the cytoplasm. The catalysed reaction is (7R,8S)-7,8-diammoniononanoate + CO2 + ATP = (4R,5S)-dethiobiotin + ADP + phosphate + 3 H(+). It functions in the pathway cofactor biosynthesis; biotin biosynthesis; biotin from 7,8-diaminononanoate: step 1/2. Catalyzes a mechanistically unusual reaction, the ATP-dependent insertion of CO2 between the N7 and N8 nitrogen atoms of 7,8-diaminopelargonic acid (DAPA, also called 7,8-diammoniononanoate) to form a ureido ring. The protein is ATP-dependent dethiobiotin synthetase BioD 1 of Haemophilus influenzae (strain ATCC 51907 / DSM 11121 / KW20 / Rd).